A 681-amino-acid chain; its full sequence is Amine oxidase [copper-containing] alpha 3, peroxisomal (681 aa).

A substrate-binding site is contributed by 323 to 334 (YLDCGDFGCGQC). The active-site Proton acceptor is the Asp-325. Cys-344 and Cys-370 are joined by a disulfide. Residue 410–415 (VGNYDY) participates in substrate binding. Tyr-413 acts as the Schiff-base intermediate with substrate; via topaquinone in catalysis. A 2',4',5'-topaquinone modification is found at Tyr-413. Cu cation-binding residues include His-470 and His-472. Mn(2+) is bound by residues Asp-481, Asp-621, and Ile-622. Cu cation is bound at residue His-632.

Belongs to the copper/topaquinone oxidase family. In terms of processing, topaquinone (TPQ) is generated by copper-dependent autoxidation of a specific tyrosyl residue. As to expression, mostly expressed in stems, and, at lower levels, in flowers and leaves. Mainly detectable in stipules, hypocotyls and roots.

The protein localises to the peroxisome. It carries out the reaction a primary methyl amine + O2 + H2O = an aldehyde + H2O2 + NH4(+). Its pathway is amine and polyamine degradation; putrescine degradation. Its function is as follows. Copper amine oxidase that can use putrescine and spermidine as substrates. Involved in putrescine catabolism in peroxisomes. The chain is Amine oxidase [copper-containing] alpha 3, peroxisomal from Arabidopsis thaliana (Mouse-ear cress).